A 349-amino-acid polypeptide reads, in one-letter code: Ion-translocating oxidoreductase complex subunit D (349 aa).

3 helical membrane passes run 36–56, 77–99, and 124–144; these read CAFF…VALS, SAML…WMIV, and AMAA…SWIA. Residue Thr-185 is modified to FMN phosphoryl threonine. The next 5 helical transmembrane spans lie at 212–232, 239–259, 265–285, 291–311, and 315–335; these read GTGV…LVLL, WHIS…GFLL, ASPL…FIAT, ATSP…VYII, and GGYP…APFI.

Belongs to the NqrB/RnfD family. In terms of assembly, the complex is composed of six subunits: RnfA, RnfB, RnfC, RnfD, RnfE and RnfG. It depends on FMN as a cofactor.

It is found in the cell inner membrane. Part of a membrane-bound complex that couples electron transfer with translocation of ions across the membrane. This chain is Ion-translocating oxidoreductase complex subunit D, found in Shewanella sp. (strain ANA-3).